A 427-amino-acid polypeptide reads, in one-letter code: UPF0415 protein C7orf25 homolog (427 aa).

Positions 200–234 are enriched in acidic residues; it reads GGEEEDEEDQEGDHEDLVEEEEDGEDDNDDDSDDT. The tract at residues 200-236 is disordered; sequence GGEEEDEEDQEGDHEDLVEEEEDGEDDNDDDSDDTDL.

This sequence belongs to the UPF0415 family.

This is UPF0415 protein C7orf25 homolog from Danio rerio (Zebrafish).